The chain runs to 426 residues: MKHLTEMVRQHKAGKTNGIYAVCSAHPLVLEAAIRYASANQTPLLIEATSNQVDQFGGYTGMTPADFRGFVCQLADSLNFPQDALILGGDHLGPNRWQNLPAAQAMANADDLIKSYVAAGFKKIHLDCSMSCQDDPIPLTDDIVAERAARLAKVAEETCREHFGEADLEYVIGTEVPVPGGAHETLSELAVTTPDAARATLEAHRHAFEKQGLNAIWPRIIALVVQPGVEFDHTNVIDYQPAKAAALSQMVENYETLIFEAHSTDYQTPQSLRQLVIDHFAILKVGPALTFALREALFSLAAIEEELVPAKACSGLRQVLENVMLDRPEYWQSHYHGDGNARRLARGYSYSDRVRYYWPDSQIDDAFAHLIRNLADSPIPLPLISQYLPLQYVKVRSGELQPTPRELIINHIQDILAQYHTACEGQ.

Belongs to the GatZ/KbaZ family. KbaZ subfamily. Forms a complex with KbaY.

The protein operates within carbohydrate metabolism; D-tagatose 6-phosphate degradation; D-glyceraldehyde 3-phosphate and glycerone phosphate from D-tagatose 6-phosphate: step 2/2. Component of the tagatose-1,6-bisphosphate aldolase KbaYZ that is required for full activity and stability of the Y subunit. Could have a chaperone-like function for the proper and stable folding of KbaY. When expressed alone, KbaZ does not show any aldolase activity. This is D-tagatose-1,6-bisphosphate aldolase subunit KbaZ from Escherichia coli O6:K15:H31 (strain 536 / UPEC).